The chain runs to 205 residues: Non-structural protein NS3 (205 aa).

A disordered region spans residues 177 to 205; the sequence is GTRSPETGCRKVTSGLPHGASGGSGTRQG. Residues 196–205 are compositionally biased toward gly residues; the sequence is ASGGSGTRQG.

This sequence belongs to the orbivirus NS3 family.

In terms of biological role, may play a role in the release of virions from infected cells. In Broadhaven virus (BRD), this protein is Non-structural protein NS3 (Segment-10).